Consider the following 576-residue polypeptide: Probable lysosomal cobalamin transporter (576 aa).

A run of 10 helical transmembrane segments spans residues 8 to 28 (LIWA…SVFI), 40 to 60 (VVTF…LLLP), 98 to 118 (YLLY…VYFW), 145 to 165 (TISF…VPVA), 188 to 208 (VLTF…ILYT), 312 to 332 (LLGG…MLLT), 347 to 367 (GYIL…VQSA), 377 to 397 (LTVV…TIGI), 419 to 439 (LTTA…PMLV), and 503 to 523 (FFGT…LLVL). The disordered stretch occupies residues 549-576 (RLLTSSARGVGDTYQSVGGRNNFSTRAG). Positions 561–576 (TYQSVGGRNNFSTRAG) are enriched in polar residues. An N-linked (GlcNAc...) asparagine glycan is attached at asparagine 570.

Belongs to the LIMR family. LMBRD1 subfamily.

It is found in the lysosome membrane. Probable lysosomal cobalamin transporter. Required to export cobalamin from lysosomes allowing its conversion to cofactors. The sequence is that of Probable lysosomal cobalamin transporter from Aspergillus niger (strain ATCC MYA-4892 / CBS 513.88 / FGSC A1513).